A 24-amino-acid chain; its full sequence is Gaegurin-6 (24 aa).

An intrachain disulfide couples Cys18 to Cys24.

It belongs to the frog skin active peptide (FSAP) family. Brevinin subfamily. Monomer. In terms of tissue distribution, expressed by the skin glands.

It is found in the secreted. Its function is as follows. Has a non-hemolytic activity. Has a broad spectrum of activity against both Gram-positive and Gram-negative bacteria, fungi and protozoa. The sequence is that of Gaegurin-6 (GGN6) from Glandirana rugosa (Japanese wrinkled frog).